The primary structure comprises 1561 residues: ABC-type transporter phomO' (1561 aa).

7 helical membrane-spanning segments follow: residues 34–54, 110–130, 139–159, 172–192, 202–222, 314–334, and 358–378; these read LYFEEVVFVLVPSCVFILLAA, CTAGLLVTLHVAGLILLCTTV, SVPASVVAALAFGVVPVLAHF, SSSLLVGLFLCVAVLLRAPLV, GSALVAVEIASLVLQLVLIAV, LGLYALAPVIPRLCLAGFTLA, and GLIGATFLIYTGIAVSTGWYW. Residues 326–599 enclose the ABC transmembrane type-1 1 domain; it reads LCLAGFTLAQ…LLQIIPSFGA (274 aa). N-linked (GlcNAc...) asparagine glycosylation occurs at asparagine 384. A run of 4 helical transmembrane segments spans residues 428 to 448, 452 to 472, 535 to 555, and 577 to 597; these read LAYAHELWVAPIETAIGTWML, VGPPGLVVLGIIGVCLGTSTY, LIVGTLLSSYSTATLAPVLVF, and LIWISLLASPLIQLLQIIPSF. The region spanning 645-871 is the ABC transporter 1 domain; sequence IHNSSFSYTD…VEDENGDVDN (227 aa). Asparagine 647 carries an N-linked (GlcNAc...) asparagine glycan. Residue 678 to 685 participates in ATP binding; it reads GPAGCGKS. A glycan (N-linked (GlcNAc...) asparagine) is linked at asparagine 721. The tract at residues 853 to 899 is disordered; the sequence is YQFPPSQADVEDENGDVDNGAENTRPRESSHTTEAQSGPPEPKSKPT. 4 consecutive transmembrane segments (helical) span residues 913–933, 969–989, 1037–1054, and 1147–1167; these read SIGFLNLVLFIGGGIIFAFCL, VLPLIAVAGWVAQLMMLIVPL, LFNTAAALLTGIAQVILI, and LVLNLVVAGLALVVMGAAVGL. In terms of domain architecture, ABC transmembrane type-1 2 spans 920–1209; that stretch reads VLFIGGGIIF…LLTAWTSLET (290 aa). N-linked (GlcNAc...) asparagine glycosylation is present at asparagine 1189. Over residues 1229–1238 the composition is skewed to basic and acidic residues; that stretch reads DVLVRPDSLD. The segment at 1229–1298 is disordered; sequence DVLVRPDSLD…DVAADGEKHE (70 aa). The span at 1269 to 1280 shows a compositional bias: acidic residues; sequence YDDDDESDENTD. Residues 1297-1545 enclose the ABC transporter 2 domain; the sequence is HEATTITTTS…SDIFAFFGRS (249 aa). ATP is bound at residue 1333–1340; it reads GRTGSGKS. Residue asparagine 1496 is glycosylated (N-linked (GlcNAc...) asparagine).

This sequence belongs to the ABC transporter superfamily. ABCC family. Conjugate transporter (TC 3.A.1.208) subfamily.

The protein localises to the membrane. Functionally, ABC-type transporter; part of the gene cluster that mediates the biosynthesis of the phomopsins, a group of hexapeptide mycotoxins which infects lupins and causes lupinosis disease in livestock. The polypeptide is ABC-type transporter phomO' (Diaporthe leptostromiformis (Lupinosis disease fungus)).